The following is a 166-amino-acid chain: NADPH-dependent 7-cyano-7-deazaguanine reductase (166 aa).

The active-site Thioimide intermediate is the cysteine 57. Residue aspartate 64 is the Proton donor of the active site. Substrate contacts are provided by residues valine 79 to serine 81 and histidine 98 to glutamate 99.

It belongs to the GTP cyclohydrolase I family. QueF type 1 subfamily.

The protein localises to the cytoplasm. It carries out the reaction 7-aminomethyl-7-carbaguanine + 2 NADP(+) = 7-cyano-7-deazaguanine + 2 NADPH + 3 H(+). The protein operates within tRNA modification; tRNA-queuosine biosynthesis. Functionally, catalyzes the NADPH-dependent reduction of 7-cyano-7-deazaguanine (preQ0) to 7-aminomethyl-7-deazaguanine (preQ1). The protein is NADPH-dependent 7-cyano-7-deazaguanine reductase of Alkaliphilus metalliredigens (strain QYMF).